The sequence spans 645 residues: Octopamine receptor Oamb (645 aa).

The Extracellular segment spans residues 1–25 (MNETECEDLIKSVKWTEPANLISLA). A glycan (N-linked (GlcNAc...) asparagine) is linked at N2. A helical membrane pass occupies residues 26 to 46 (VLEFINVLVIGGNCLVIAAVF). Topologically, residues 47–56 (CSNKLRSVTN) are cytoplasmic. A helical transmembrane segment spans residues 57 to 77 (FFIVNLAVADLLVGLAVLPFS). The Extracellular portion of the chain corresponds to 78–94 (ATWEVFKVWIFGDLWCR). A disulfide bond links C93 and C287. Residues 95–115 (IWLAVDVWMCTASILNLCAIS) form a helical membrane-spanning segment. Topologically, residues 116–138 (LDRYVAVTRPVTYPSIMSTKKAK) are cytoplasmic. Residues 139 to 159 (SLIAGIWVLSFFICFPPLVGW) traverse the membrane as a helical segment. The Extracellular portion of the chain corresponds to 160–295 (KDQKAVIQPT…KCELTNDRGY (136 aa)). N174 carries N-linked (GlcNAc...) asparagine glycosylation. The interval 190-212 (QLGLDSIKDQGEASLPPSPPHIG) is disordered. The helical transmembrane segment at 296–316 (VLYSALGSFYIPMFVMLFFYW) threads the bilayer. The Cytoplasmic segment spans residues 317-520 (RIYRAAVRTT…FRMETKAAKT (204 aa)). Disordered stretches follow at residues 358 to 386 (GRGS…PSPE) and 479 to 500 (RQSN…KKMG). Over residues 369 to 385 (SNGSTQSTTTTLGTPSP) the composition is skewed to low complexity. The helical transmembrane segment at 521 to 541 (LAIIVGMFIFCWCPFFTMYII) threads the bilayer. The Extracellular portion of the chain corresponds to 542–551 (RPFCQDCVDP). The helical transmembrane segment at 552–572 (LLFSVLFWLGYCNSAVNPMIY) threads the bilayer. At 573–645 (ALFSKDFRFA…HHSEMSNDPR (73 aa)) the chain is on the cytoplasmic side. Positions 621–645 (TPSAAAHSFGDESELHHSEMSNDPR) are disordered. A compositionally biased stretch (basic and acidic residues) spans 629–645 (FGDESELHHSEMSNDPR).

Belongs to the G-protein coupled receptor 1 family. Highly enriched in mushroom body neuropil and in the ellipsoid body (at protein level). Expressed in oviduct epithelium (at protein level). Expressed in the adult and larval brain, thoracic and abdominal ganglia, terminal cells of the larval tracheal system, muscle, mature eggs and reproductive system.

Its subcellular location is the cell membrane. Its function is as follows. Receptor for octopamine (OA) which is a neurotransmitter, neurohormone and neuromodulator in invertebrates. Stimulates intracellular accumulation of cAMP and Ca(2+) following ligand binding. Required for ovulation. Following activation on mature follicle cells by OA, induces activity of the metalloprotease Mmp2 which leads to breakdown of the posterior follicle wall, resulting in ovulation. Ligand binding probably also leads to activation of CamKII which is also required for ovulation. Modulates sleep/wake behavior by acting in neurons of the pars intercerebralis to promote wakefulness. Plays a role in courtship conditioning where the courtship behavior of males rejected by already mated females is inhibited with further females. Required in the mushroom body for appetitive olfactory learning. Specifically conveys the short-term reinforcing effects of sweet taste. In insulin-producing cells of the brain, plays a role in inhibiting transcription of insulin-like peptide Ilp3. Also plays a role in social behavior by modulating male agression. In Drosophila melanogaster (Fruit fly), this protein is Octopamine receptor Oamb.